A 159-amino-acid polypeptide reads, in one-letter code: NADH-quinone oxidoreductase subunit I (159 aa).

2 4Fe-4S ferredoxin-type domains span residues 51-80 and 90-119; these read RRYESGEERCIACKLCEAICPAQAIVIEAD and TRYDIDMTKCIYCGLCQEACPVDAIVEGPN. Positions 60, 63, 66, 70, 99, 102, 105, and 109 each coordinate [4Fe-4S] cluster.

The protein belongs to the complex I 23 kDa subunit family. As to quaternary structure, NDH-1 is composed of 14 different subunits. Subunits NuoA, H, J, K, L, M, N constitute the membrane sector of the complex. The cofactor is [4Fe-4S] cluster.

The protein resides in the cell inner membrane. It catalyses the reaction a quinone + NADH + 5 H(+)(in) = a quinol + NAD(+) + 4 H(+)(out). Functionally, NDH-1 shuttles electrons from NADH, via FMN and iron-sulfur (Fe-S) centers, to quinones in the respiratory chain. The immediate electron acceptor for the enzyme in this species is believed to be ubiquinone. Couples the redox reaction to proton translocation (for every two electrons transferred, four hydrogen ions are translocated across the cytoplasmic membrane), and thus conserves the redox energy in a proton gradient. The chain is NADH-quinone oxidoreductase subunit I from Rickettsia akari (strain Hartford).